Consider the following 104-residue polypeptide: Guanidinium exporter (104 aa).

The Cytoplasmic segment spans residues 1-3 (MSW). The helical transmembrane segment at 4–26 (IILFVAGLLEIVWAVGLKYTHGF) threads the bilayer. The Periplasmic segment spans residues 27–32 (TRLTPS). Residues 33-50 (IITISAMIVSMGMLSYAM) traverse the membrane as a helical segment. At 51–54 (KGLP) the chain is on the cytoplasmic side. Residues 55–77 (AGTAYAIWTGIGAVGTAIFGIIV) form a helical membrane-spanning segment. The Periplasmic segment spans residues 78–83 (FGESAN). The helical transmembrane segment at 84 to 103 (IYRLLSLAMIVFGIIGLKLA) threads the bilayer. Residue serine 104 is a topological domain, cytoplasmic.

It belongs to the drug/metabolite transporter (DMT) superfamily. Small multidrug resistance (SMR) (TC 2.A.7.1) family. Gdx/SugE subfamily.

The protein resides in the cell inner membrane. Functionally, guanidinium ion exporter. Couples guanidinium export to the proton motive force, exchanging one guanidinium ion for two protons. This is Guanidinium exporter from Proteus vulgaris.